A 386-amino-acid chain; its full sequence is Formate-dependent phosphoribosylglycinamide formyltransferase (386 aa).

Residues 10-11 (EL) and glutamate 70 contribute to the N(1)-(5-phospho-beta-D-ribosyl)glycinamide site. Residues arginine 102, lysine 143, 148–153 (SSGKGQ), 183–186 (EAFV), and glutamate 191 each bind ATP. The ATP-grasp domain occupies 107–298 (DLAAKELGLK…EFELHLRAIL (192 aa)). The Mg(2+) site is built by glutamate 256 and glutamate 268. N(1)-(5-phospho-beta-D-ribosyl)glycinamide-binding positions include aspartate 275, lysine 346, and 353–354 (RR).

The protein belongs to the PurK/PurT family. Homodimer.

It catalyses the reaction N(1)-(5-phospho-beta-D-ribosyl)glycinamide + formate + ATP = N(2)-formyl-N(1)-(5-phospho-beta-D-ribosyl)glycinamide + ADP + phosphate + H(+). It functions in the pathway purine metabolism; IMP biosynthesis via de novo pathway; N(2)-formyl-N(1)-(5-phospho-D-ribosyl)glycinamide from N(1)-(5-phospho-D-ribosyl)glycinamide (formate route): step 1/1. Involved in the de novo purine biosynthesis. Catalyzes the transfer of formate to 5-phospho-ribosyl-glycinamide (GAR), producing 5-phospho-ribosyl-N-formylglycinamide (FGAR). Formate is provided by PurU via hydrolysis of 10-formyl-tetrahydrofolate. In Flavobacterium psychrophilum (strain ATCC 49511 / DSM 21280 / CIP 103535 / JIP02/86), this protein is Formate-dependent phosphoribosylglycinamide formyltransferase.